Here is a 401-residue protein sequence, read N- to C-terminus: NAD(P)H-quinone oxidoreductase subunit H, chloroplastic (401 aa).

This sequence belongs to the complex I 49 kDa subunit family. In terms of assembly, NDH is composed of at least 16 different subunits, 5 of which are encoded in the nucleus.

Its subcellular location is the plastid. It is found in the chloroplast thylakoid membrane. The enzyme catalyses a plastoquinone + NADH + (n+1) H(+)(in) = a plastoquinol + NAD(+) + n H(+)(out). The catalysed reaction is a plastoquinone + NADPH + (n+1) H(+)(in) = a plastoquinol + NADP(+) + n H(+)(out). In terms of biological role, NDH shuttles electrons from NAD(P)H:plastoquinone, via FMN and iron-sulfur (Fe-S) centers, to quinones in the photosynthetic chain and possibly in a chloroplast respiratory chain. The immediate electron acceptor for the enzyme in this species is believed to be plastoquinone. Couples the redox reaction to proton translocation, and thus conserves the redox energy in a proton gradient. The polypeptide is NAD(P)H-quinone oxidoreductase subunit H, chloroplastic (Aethionema cordifolium (Lebanon stonecress)).